The following is a 179-amino-acid chain: Large ribosomal subunit protein uL16 (179 aa).

The segment at 147–179 (KASSASLANLDEDANSQTDDETSSSGSVATVES) is disordered. The segment covering 156-168 (LDEDANSQTDDET) has biased composition (acidic residues). Polar residues predominate over residues 169 to 179 (SSSGSVATVES).

The protein belongs to the universal ribosomal protein uL16 family. In terms of assembly, part of the 50S ribosomal subunit.

Its function is as follows. Binds 23S rRNA and is also seen to make contacts with the A and possibly P site tRNAs. The protein is Large ribosomal subunit protein uL16 of Prochlorococcus marinus (strain MIT 9211).